A 258-amino-acid chain; its full sequence is MSDLKAAALRALKLMDLTTLNDDDTDAKVISLCHDAKTAVGNTAAICIYPRFIPIAKKTLREQGTPEVRIATVTNFPHGNDDIDIAVAETKAAVAYGADEVDVVFPYRALMAGDEKVGFELVKQCKEACGDILLKVIIETGELKEEALIKKASQICIEAGADFIKTSTGKVPVNATPEYARMMLEVIRDMGVAETVGFKPAGGVRTAEDAAAYLAMADEILGDNWVDARHYRFGASSLLTNLLNTLEVSDDVADPTAY.

The active-site Proton donor/acceptor is the Asp-102. Lys-165 functions as the Schiff-base intermediate with acetaldehyde in the catalytic mechanism. Catalysis depends on Lys-199, which acts as the Proton donor/acceptor.

The protein belongs to the DeoC/FbaB aldolase family. DeoC type 2 subfamily.

The protein resides in the cytoplasm. It carries out the reaction 2-deoxy-D-ribose 5-phosphate = D-glyceraldehyde 3-phosphate + acetaldehyde. It participates in carbohydrate degradation; 2-deoxy-D-ribose 1-phosphate degradation; D-glyceraldehyde 3-phosphate and acetaldehyde from 2-deoxy-alpha-D-ribose 1-phosphate: step 2/2. Functionally, catalyzes a reversible aldol reaction between acetaldehyde and D-glyceraldehyde 3-phosphate to generate 2-deoxy-D-ribose 5-phosphate. In Vibrio parahaemolyticus serotype O3:K6 (strain RIMD 2210633), this protein is Deoxyribose-phosphate aldolase.